The following is a 116-amino-acid chain: Nitrogenase-stabilizing/protective protein NifW (116 aa).

Belongs to the NifW family. In terms of assembly, homotrimer; associates with NifD.

Functionally, may protect the nitrogenase Fe-Mo protein from oxidative damage. This is Nitrogenase-stabilizing/protective protein NifW from Rhodopseudomonas palustris (strain ATCC BAA-98 / CGA009).